The chain runs to 624 residues: (-)-beta-phellandrene synthase 2, chloroplastic (624 aa).

The N-terminal 48 residues, 1–48 (MAIVSSVPLASKSCLHKSLISSIHKLKPFCRTIPTLGMSRPGKYVMPS), are a transit peptide targeting the chloroplast. 3 residues coordinate Mg(2+): Asp375, Asp379, and Asp527. Positions 375 to 379 (DDMYD) match the DDXXD motif motif.

The protein belongs to the terpene synthase family. Tpsd subfamily. Mg(2+) is required as a cofactor. Mn(2+) serves as cofactor.

It is found in the plastid. The protein resides in the chloroplast. It catalyses the reaction (2E)-geranyl diphosphate = (-)-beta-phellandrene + diphosphate. The protein operates within terpene metabolism; oleoresin biosynthesis. Functionally, terpene synthase (TPS) involved in the biosynthesis of monoterpene natural products included in conifer oleoresin secretions and volatile emissions; these compounds contribute to biotic and abiotic stress defense against herbivores and pathogens. Catalyzes the conversion of (2E)-geranyl diphosphate (GPP) to (-)-beta-phellandrene. This Picea sitchensis (Sitka spruce) protein is (-)-beta-phellandrene synthase 2, chloroplastic.